The primary structure comprises 320 residues: Cytochrome f (320 aa).

A signal peptide spans 1–35; it reads MNFFTHKKNNFGSFVTIFSFLVALGVTNLTPAAEA. Heme is bound by residues Tyr-36, Cys-56, Cys-59, and His-60. The helical transmembrane segment at 286–306 threads the bilayer; the sequence is IQGLLVFFATVLFAQVLLVLK.

It belongs to the cytochrome f family. The 4 large subunits of the cytochrome b6-f complex are cytochrome b6, subunit IV (17 kDa polypeptide, petD), cytochrome f and the Rieske protein, while the 4 small subunits are PetG, PetL, PetM and PetN. The complex functions as a dimer. Requires heme as cofactor.

The protein localises to the plastid. It is found in the chloroplast thylakoid membrane. Component of the cytochrome b6-f complex, which mediates electron transfer between photosystem II (PSII) and photosystem I (PSI), cyclic electron flow around PSI, and state transitions. This Tetradesmus obliquus (Green alga) protein is Cytochrome f.